The chain runs to 515 residues: 2,3-bisphosphoglycerate-independent phosphoglycerate mutase (515 aa).

D14 and S64 together coordinate Mn(2+). Catalysis depends on S64, which acts as the Phosphoserine intermediate. Residues H125, 155-156 (RD), R187, R193, 263-266 (RADR), and K337 each bind substrate. Mn(2+) is bound by residues D404, H408, D445, H446, and H464.

This sequence belongs to the BPG-independent phosphoglycerate mutase family. In terms of assembly, monomer. Mn(2+) is required as a cofactor.

It catalyses the reaction (2R)-2-phosphoglycerate = (2R)-3-phosphoglycerate. The protein operates within carbohydrate degradation; glycolysis; pyruvate from D-glyceraldehyde 3-phosphate: step 3/5. Catalyzes the interconversion of 2-phosphoglycerate and 3-phosphoglycerate. In Pseudomonas aeruginosa (strain UCBPP-PA14), this protein is 2,3-bisphosphoglycerate-independent phosphoglycerate mutase.